Reading from the N-terminus, the 178-residue chain is uncharacterized protein (178 aa).

It to E.coli YrdD.

This is an uncharacterized protein from Haemophilus influenzae (strain ATCC 51907 / DSM 11121 / KW20 / Rd).